The primary structure comprises 412 residues: Lysosomal phospholipase A and acyltransferase (412 aa).

Positions 1–33 (MDRHLCTCRETQLRSGLLLPLFLLMMLADLTLP) are cleaved as a signal peptide. Aspartate 46 serves as a coordination point for substrate. Cysteine 65 and cysteine 89 are disulfide-bonded. Asparagine 99 carries N-linked (GlcNAc...) asparagine glycosylation. Residue serine 198 is the Acyl-ester intermediate of the active site. Serine 198 serves as a coordination point for Zn(2+). Methionine 199 is a substrate binding site. 2 N-linked (GlcNAc...) asparagine glycosylation sites follow: asparagine 273 and asparagine 289. Cysteine 355 is a binding site for Zn(2+). Residues aspartate 360 and histidine 392 each act as charge relay system in the active site. Histidine 392 serves as a coordination point for Zn(2+). Residue asparagine 398 is glycosylated (N-linked (GlcNAc...) asparagine).

It belongs to the AB hydrolase superfamily. Lipase family. Post-translationally, N-glycosylated. N-glycosylation is important for maturation of the enzyme and normal subcellular location. In terms of tissue distribution, detected in blood plasma. Detected in alveolar macrophages (at protein level). Detected in heart, liver, spleen, kidney, thymus, brain and lung.

Its subcellular location is the secreted. It is found in the lysosome. The protein localises to the membrane. It catalyses the reaction a 1,2-diacyl-sn-glycero-3-phosphocholine + H2O = a 2-acyl-sn-glycero-3-phosphocholine + a fatty acid + H(+). The catalysed reaction is 1-hexadecanoyl-2-(9Z-octadecenoyl)-sn-glycero-3-phosphocholine + H2O = 2-(9Z-octadecenoyl)-sn-glycero-3-phosphocholine + hexadecanoate + H(+). It carries out the reaction 1,2-di-(9Z-octadecenoyl)-sn-glycero-3-phosphocholine + H2O = 2-(9Z-octadecenoyl)-sn-glycero-3-phosphocholine + (9Z)-octadecenoate + H(+). The enzyme catalyses 1-hexadecanoyl-2-glutaroyl-sn-glycero-3-phosphocholine + H2O = 2-glutaroyl-sn-glycero-3-phosphocholine + hexadecanoate + H(+). It catalyses the reaction 1-hexadecanoyl-2-nonadioyl-sn-glycero-3-phosphocholine + H2O = 2-nonadioyl-sn-glycero-3-phosphocholine + hexadecanoate + H(+). The catalysed reaction is 1-hexadecanoyl-2-(5-oxopentanoyl)-sn-glycero-3-phosphocholine + H2O = 2-(5-oxopentanoyl)-sn-glycero-3-phosphocholine + hexadecanoate + H(+). It carries out the reaction 1-hexadecanoyl-2-(9-oxononanoyl)-sn-glycero-3-phosphocholine + H2O = 2-(9-oxononanoyl)-sn-glycero-3-phosphocholine + hexadecanoate + H(+). The enzyme catalyses 1,2-dihexadecanoyl-sn-glycero-3-phosphocholine + H2O = 2-hexadecanoyl-sn-glycero-3-phosphocholine + hexadecanoate + H(+). It catalyses the reaction a 1,2-diacyl-sn-glycero-3-phosphocholine + H2O = a 1-acyl-sn-glycero-3-phosphocholine + a fatty acid + H(+). The catalysed reaction is 1-hexadecanoyl-2-(9Z-octadecenoyl)-sn-glycero-3-phosphocholine + H2O = 1-hexadecanoyl-sn-glycero-3-phosphocholine + (9Z)-octadecenoate + H(+). It carries out the reaction 1,2-di-(9Z-octadecenoyl)-sn-glycero-3-phosphocholine + H2O = 1-(9Z-octadecenoyl)-sn-glycero-3-phosphocholine + (9Z)-octadecenoate + H(+). The enzyme catalyses 1,2-dihexadecanoyl-sn-glycero-3-phosphocholine + H2O = 1-hexadecanoyl-sn-glycero-3-phosphocholine + hexadecanoate + H(+). It catalyses the reaction a 1-acyl-sn-glycero-3-phosphocholine + H2O = sn-glycerol 3-phosphocholine + a fatty acid + H(+). The catalysed reaction is 1-hexadecanoyl-sn-glycero-3-phosphocholine + H2O = sn-glycerol 3-phosphocholine + hexadecanoate + H(+). It carries out the reaction N-(acetyl)-sphing-4-enine + a 1,2-diacyl-sn-glycero-3-phosphoethanolamine = 1-O-acyl-N-(acetyl)-sphing-4-enine + a 2-acyl-sn-glycero-3-phosphoethanolamine. The enzyme catalyses 1-hexadecanoyl-2-(9Z-octadecenoyl)-sn-glycero-3-phosphoethanolamine + N-(acetyl)-sphing-4-enine = 2-(9Z-octadecenoyl)-sn-glycero-3-phosphoethanolamine + 1-hexadecanoyl-N-(acetyl)-sphing-4-enine. It catalyses the reaction 1-hexadecanoyl-2-(9Z,12Z-octadecadienoyl)-sn-glycero-3-phosphoethanolamine + N-(acetyl)-sphing-4-enine = 2-(9Z,12Z)-octadecadienoyl-sn-glycero-3-phosphoethanolamine + 1-hexadecanoyl-N-(acetyl)-sphing-4-enine. The catalysed reaction is 1-hexadecanoyl-2-(5Z,8Z,11Z,14Z-eicosatetraenoyl)-sn-glycero-3-phosphoethanolamine + N-(acetyl)-sphing-4-enine = 2-(5Z,8Z,11Z,14Z)-eicosatetraenoyl-sn-glycero-3-phosphoethanolamine + 1-hexadecanoyl-N-(acetyl)-sphing-4-enine. It carries out the reaction N-(acetyl)-sphing-4-enine + a 1,2-diacyl-sn-glycero-3-phosphoethanolamine = 1-O-acyl-N-(acetyl)-sphing-4-enine + a 1-acyl-sn-glycero-3-phosphoethanolamine. The enzyme catalyses 1-hexadecanoyl-2-(9Z-octadecenoyl)-sn-glycero-3-phosphoethanolamine + N-(acetyl)-sphing-4-enine = 1-(9Z-octadecenoyl)-N-(acetyl)-sphing-4-enine + 1-hexadecanoyl-sn-glycero-3-phosphoethanolamine. It catalyses the reaction 1-hexadecanoyl-2-(9Z,12Z-octadecadienoyl)-sn-glycero-3-phosphoethanolamine + N-(acetyl)-sphing-4-enine = 1-(9Z,12Z-octadecadienoyl)-N-acetylsphing-4-enine + 1-hexadecanoyl-sn-glycero-3-phosphoethanolamine. The catalysed reaction is 1-hexadecanoyl-2-(5Z,8Z,11Z,14Z-eicosatetraenoyl)-sn-glycero-3-phosphoethanolamine + N-(acetyl)-sphing-4-enine = 1-(5Z,8Z,11Z,14Z)-eicosatetraenoyl-N-(acetyl)-sphing-4-enine + 1-hexadecanoyl-sn-glycero-3-phosphoethanolamine. It carries out the reaction N-(acetyl)-sphing-4-enine + a 1,2-diacyl-sn-glycero-3-phosphocholine = 1-O-acyl-N-(acetyl)-sphing-4-enine + a 2-acyl-sn-glycero-3-phosphocholine. The enzyme catalyses 1-hexadecanoyl-2-(9Z-octadecenoyl)-sn-glycero-3-phosphocholine + N-(acetyl)-sphing-4-enine = 1-hexadecanoyl-N-(acetyl)-sphing-4-enine + 2-(9Z-octadecenoyl)-sn-glycero-3-phosphocholine. It catalyses the reaction 1-hexadecanoyl-2-(9Z,12Z-octadecadienoyl)-sn-glycero-3-phosphocholine + N-(acetyl)-sphing-4-enine = 2-(9Z,12Z-octadecadienoyl)-sn-glycero-3-phosphocholine + 1-hexadecanoyl-N-(acetyl)-sphing-4-enine. The catalysed reaction is 1-hexadecanoyl-2-(5Z,8Z,11Z,14Z-eicosatetraenoyl)-sn-glycero-3-phosphocholine + N-(acetyl)-sphing-4-enine = 1-hexadecanoyl-N-(acetyl)-sphing-4-enine + 2-(5Z,8Z,11Z,14Z)-eicosatetraenoyl-sn-glycero-3-phosphocholine. It carries out the reaction 1-hexadecanoyl-2-(4Z,7Z,10Z,13Z,16Z,19Z-docosahexaenoyl)-sn-glycero-3-phosphocholine + N-(acetyl)-sphing-4-enine = 2-(4Z,7Z,10Z,13Z,16Z,19Z-docosahexaenoyl)-sn-glycero-3-phosphocholine + 1-hexadecanoyl-N-(acetyl)-sphing-4-enine. The enzyme catalyses 1-hexadecanoyl-2-nonadioyl-sn-glycero-3-phosphocholine + N-(acetyl)-sphing-4-enine = 2-nonadioyl-sn-glycero-3-phosphocholine + 1-hexadecanoyl-N-(acetyl)-sphing-4-enine. It catalyses the reaction 1-octadecanoyl-2-(9Z-octadecenoyl)-sn-glycero-3-phosphocholine + N-(acetyl)-sphing-4-enine = 1-octadecanoyl-N-(acetyl)-sphing-4-enine + 2-(9Z-octadecenoyl)-sn-glycero-3-phosphocholine. The catalysed reaction is 1-(9Z)-octadecenoyl-2-octadecanoyl-sn-glycero-3-phosphocholine + N-(acetyl)-sphing-4-enine = 2-octadecanoyl-sn-glycero-3-phosphocholine + 1-(9Z-octadecenoyl)-N-(acetyl)-sphing-4-enine. It carries out the reaction 1-octadecanoyl-2-(5Z,8Z,11Z,14Z-eicosatetraenoyl)-sn-glycero-3-phosphocholine + N-(acetyl)-sphing-4-enine = 1-octadecanoyl-N-(acetyl)-sphing-4-enine + 2-(5Z,8Z,11Z,14Z)-eicosatetraenoyl-sn-glycero-3-phosphocholine. The enzyme catalyses 1-(9Z-octadecenoyl)-2-hexadecanoyl-sn-glycero-3-phosphocholine + N-(acetyl)-sphing-4-enine = 1-(9Z-octadecenoyl)-N-(acetyl)-sphing-4-enine + 2-hexadecanoyl-sn-glycero-3-phosphocholine. It catalyses the reaction N-(acetyl)-sphing-4-enine + a 1,2-diacyl-sn-glycero-3-phosphocholine = 1-O-acyl-N-(acetyl)-sphing-4-enine + a 1-acyl-sn-glycero-3-phosphocholine. The catalysed reaction is 1-hexadecanoyl-2-(9Z-octadecenoyl)-sn-glycero-3-phosphocholine + N-(acetyl)-sphing-4-enine = 1-(9Z-octadecenoyl)-N-(acetyl)-sphing-4-enine + 1-hexadecanoyl-sn-glycero-3-phosphocholine. It carries out the reaction 1-hexadecanoyl-2-(9Z,12Z-octadecadienoyl)-sn-glycero-3-phosphocholine + N-(acetyl)-sphing-4-enine = 1-(9Z,12Z-octadecadienoyl)-N-acetylsphing-4-enine + 1-hexadecanoyl-sn-glycero-3-phosphocholine. The enzyme catalyses 1-hexadecanoyl-2-(5Z,8Z,11Z,14Z-eicosatetraenoyl)-sn-glycero-3-phosphocholine + N-(acetyl)-sphing-4-enine = 1-(5Z,8Z,11Z,14Z)-eicosatetraenoyl-N-(acetyl)-sphing-4-enine + 1-hexadecanoyl-sn-glycero-3-phosphocholine. It catalyses the reaction 1-hexadecanoyl-2-(4Z,7Z,10Z,13Z,16Z,19Z-docosahexaenoyl)-sn-glycero-3-phosphocholine + N-(acetyl)-sphing-4-enine = 1-(4Z,7Z,10Z,13Z,16Z,19Z-docosahexaenoyl)-N-(acetyl)-sphing-4-enine + 1-hexadecanoyl-sn-glycero-3-phosphocholine. The catalysed reaction is 1-octadecanoyl-2-(9Z-octadecenoyl)-sn-glycero-3-phosphocholine + N-(acetyl)-sphing-4-enine = 1-(9Z-octadecenoyl)-N-(acetyl)-sphing-4-enine + 1-octadecanoyl-sn-glycero-3-phosphocholine. It carries out the reaction 1-octadecanoyl-2-(9Z,12Z)-octadecadienoyl-sn-glycero-3-phosphocholine + N-(acetyl)-sphing-4-enine = 1-(9Z,12Z-octadecadienoyl)-N-acetylsphing-4-enine + 1-octadecanoyl-sn-glycero-3-phosphocholine. The enzyme catalyses 1-(9Z-octadecenoyl)-2-hexadecanoyl-sn-glycero-3-phosphocholine + N-(acetyl)-sphing-4-enine = 1-hexadecanoyl-N-(acetyl)-sphing-4-enine + 1-(9Z-octadecenoyl)-sn-glycero-3-phosphocholine. It catalyses the reaction 1-(9Z)-octadecenoyl-2-octadecanoyl-sn-glycero-3-phosphocholine + N-(acetyl)-sphing-4-enine = 1-octadecanoyl-N-(acetyl)-sphing-4-enine + 1-(9Z-octadecenoyl)-sn-glycero-3-phosphocholine. The catalysed reaction is 1,2-di-(9Z-octadecenoyl)-sn-glycero-3-phosphocholine + N-(acetyl)-sphing-4-enine = 1-(9Z-octadecenoyl)-N-(acetyl)-sphing-4-enine + 1-(9Z-octadecenoyl)-sn-glycero-3-phosphocholine. It carries out the reaction 1-octadecanoyl-2-(5Z,8Z,11Z,14Z-eicosatetraenoyl)-sn-glycero-3-phosphocholine + N-(acetyl)-sphing-4-enine = 1-(5Z,8Z,11Z,14Z)-eicosatetraenoyl-N-(acetyl)-sphing-4-enine + 1-octadecanoyl-sn-glycero-3-phosphocholine. The enzyme catalyses a 1,2-diacyl-sn-glycero-3-phospho-L-serine + N-(acetyl)-sphing-4-enine = a 2-acyl-sn-glycero-3-phospho-L-serine + 1-O-acyl-N-(acetyl)-sphing-4-enine. It catalyses the reaction 1-octadecanoyl-2-(9Z-octadecenoyl)-sn-glycero-3-phospho-L-serine + N-(acetyl)-sphing-4-enine = 2-(9Z-octadecenoyl)-sn-glycero-3-phospho-L-serine + 1-octadecanoyl-N-(acetyl)-sphing-4-enine. The catalysed reaction is a 1,2-diacyl-sn-glycero-3-phospho-L-serine + N-(acetyl)-sphing-4-enine = 1-O-acyl-N-(acetyl)-sphing-4-enine + a 1-acyl-sn-glycero-3-phospho-L-serine. It carries out the reaction 1-octadecanoyl-2-(9Z-octadecenoyl)-sn-glycero-3-phospho-L-serine + N-(acetyl)-sphing-4-enine = 1-octadecanoyl-sn-glycero-3-phosphoserine + 1-(9Z-octadecenoyl)-N-(acetyl)-sphing-4-enine. The enzyme catalyses a 1,2-diacyl-sn-glycero-3-phospho-(1'-sn-glycerol) + N-(acetyl)-sphing-4-enine = 2-acyl-sn-glycero-3-phospho-(1'-sn-glycerol) + 1-O-acyl-N-(acetyl)-sphing-4-enine. It catalyses the reaction 1-octadecanoyl-2-(9Z-octadecenoyl)-sn-glycero-3-phospho-(1'-sn-glycerol) + N-(acetyl)-sphing-4-enine = 2-(9Z-octadecenoyl)-sn-glycero-3-phospho-(1'-sn-glycerol) + 1-octadecanoyl-N-(acetyl)-sphing-4-enine. The catalysed reaction is a 1,2-diacyl-sn-glycero-3-phospho-(1'-sn-glycerol) + N-(acetyl)-sphing-4-enine = 1-O-acyl-N-(acetyl)-sphing-4-enine + 1-acyl-sn-glycero-3-phospho-(1'-sn-glycerol). It carries out the reaction 1-octadecanoyl-2-(9Z-octadecenoyl)-sn-glycero-3-phospho-(1'-sn-glycerol) + N-(acetyl)-sphing-4-enine = 1-octadecanoyl-sn-glycero-3-phospho-(1'-sn-glycerol) + 1-(9Z-octadecenoyl)-N-(acetyl)-sphing-4-enine. The enzyme catalyses an N-acylethanolamine + a 1,2-diacyl-sn-glycero-3-phosphocholine = 2-(acylamino)ethyl fatty acid + a 2-acyl-sn-glycero-3-phosphocholine. It catalyses the reaction an N-acylethanolamine + a 1,2-diacyl-sn-glycero-3-phosphocholine = 2-(acylamino)ethyl fatty acid + a 1-acyl-sn-glycero-3-phosphocholine. The catalysed reaction is N-(5Z,8Z,11Z,14Z-eicosatetraenoyl)-ethanolamine + 1,2-di-(9Z-octadecenoyl)-sn-glycero-3-phosphocholine = 2-[(5Z,8Z,11Z,14Z)-eicosatetraenoylamino]ethyl (9Z)-octadecenoate + (9Z-octadecenoyl)-sn-glycero-3-phosphocholine. It carries out the reaction N-(9Z-octadecenoyl) ethanolamine + 1,2-di-(9Z-octadecenoyl)-sn-glycero-3-phosphocholine = 2-[(9Z)-octadecenoylamino]ethyl (9Z)-octadecenoate + (9Z-octadecenoyl)-sn-glycero-3-phosphocholine. The enzyme catalyses a 3-acyl-sn-glycerol + a 1,2-diacyl-sn-glycero-3-phosphocholine = a 1,3-diacylglycerol + a 1-acyl-sn-glycero-3-phosphocholine. It catalyses the reaction a 3-acyl-sn-glycerol + a 1,2-diacyl-sn-glycero-3-phosphocholine = a 1,3-diacylglycerol + a 2-acyl-sn-glycero-3-phosphocholine. The catalysed reaction is 3-(9Z-octadecenoyl)-sn-glycerol + 1,2-di-(9Z-octadecenoyl)-sn-glycero-3-phosphocholine = 1,3-di-(9Z-octadecenoyl)-glycerol + (9Z-octadecenoyl)-sn-glycero-3-phosphocholine. It carries out the reaction 3-hexadecanoyl-sn-glycerol + 1,2-di-(9Z-octadecenoyl)-sn-glycero-3-phosphocholine = 1-(9Z)-octadecenoyl-3-hexadecanoyl-sn-glycerol + (9Z-octadecenoyl)-sn-glycero-3-phosphocholine. The enzyme catalyses a 1-acyl-sn-glycerol + a 1,2-diacyl-sn-glycero-3-phosphocholine = a 1,3-diacylglycerol + a 2-acyl-sn-glycero-3-phosphocholine. It catalyses the reaction a 1-acyl-sn-glycerol + a 1,2-diacyl-sn-glycero-3-phosphocholine = a 1,3-diacylglycerol + a 1-acyl-sn-glycero-3-phosphocholine. The catalysed reaction is 1-(9Z-octadecenoyl)-sn-glycerol + 1,2-di-(9Z-octadecenoyl)-sn-glycero-3-phosphocholine = 1,3-di-(9Z-octadecenoyl)-glycerol + (9Z-octadecenoyl)-sn-glycero-3-phosphocholine. It carries out the reaction 1-hexadecanoyl-sn-glycerol + 1,2-di-(9Z-octadecenoyl)-sn-glycero-3-phosphocholine = 1-hexadecanoyl-3-(9Z)-octadecenoyl-sn-glycerol + (9Z-octadecenoyl)-sn-glycero-3-phosphocholine. The enzyme catalyses a 2-acylglycerol + a 1,2-diacyl-sn-glycero-3-phosphocholine = a 1,2-diacylglycerol + a 2-acyl-sn-glycero-3-phosphocholine. It catalyses the reaction a 2-acylglycerol + a 1,2-diacyl-sn-glycero-3-phosphocholine = a 1,2-diacylglycerol + a 1-acyl-sn-glycero-3-phosphocholine. The catalysed reaction is 2-hexadecanoylglycerol + 1,2-di-(9Z-octadecenoyl)-sn-glycero-3-phosphocholine = 1-(9Z)-octadecenoyl-2-hexadecanoylglycerol + (9Z-octadecenoyl)-sn-glycero-3-phosphocholine. It carries out the reaction 1-O-alkylglycerol + a 1,2-diacyl-sn-glycero-3-phosphocholine = 1-O-alkyl-3-acylglycerol + a 1-acyl-sn-glycero-3-phosphocholine. The enzyme catalyses 1-O-alkylglycerol + a 1,2-diacyl-sn-glycero-3-phosphocholine = 1-O-alkyl-3-acylglycerol + a 2-acyl-sn-glycero-3-phosphocholine. It catalyses the reaction 1-O-hexadecylglycerol + 1,2-di-(9Z-octadecenoyl)-sn-glycero-3-phosphocholine = 1-O-hexadecyl-3-(9Z)-octadecenoylglycerol + (9Z-octadecenoyl)-sn-glycero-3-phosphocholine. The catalysed reaction is 1-O-alkyl-2-acyl-sn-glycerol + a 1,2-diacyl-sn-glycero-3-phosphocholine = 1-O-alkyl-2,3-diacyl-sn-glycerol + a 2-acyl-sn-glycero-3-phosphocholine. It carries out the reaction 1-O-alkyl-2-acyl-sn-glycerol + a 1,2-diacyl-sn-glycero-3-phosphocholine = 1-O-alkyl-2,3-diacyl-sn-glycerol + a 1-acyl-sn-glycero-3-phosphocholine. The enzyme catalyses 1-O-hexadecyl-2-acetyl-sn-glycerol + 1,2-di-(9Z-octadecenoyl)-sn-glycero-3-phosphocholine = 1-O-hexadecyl-2-acetyl-3-(9Z)-octadecenoyl-sn-glycerol + (9Z-octadecenoyl)-sn-glycero-3-phosphocholine. It catalyses the reaction 1-O-hexadecyl-2-O-methyl-sn-glycerol + 1,2-di-(9Z-octadecenoyl)-sn-glycero-3-phosphocholine = 1-O-hexadecyl-2-O-methyl-3-(9Z)-octadecenoyl-sn-glycerol + (9Z-octadecenoyl)-sn-glycero-3-phosphocholine. The catalysed reaction is a 1,2-diacyl-sn-glycero-3-phosphoethanolamine + H2O = a 1-acyl-sn-glycero-3-phosphoethanolamine + a fatty acid + H(+). It carries out the reaction 1-acyl-2-(5Z,8Z,11Z,14Z)-eicosatetraenoyl-sn-glycero-3-phosphoethanolamine + H2O = a 1-acyl-sn-glycero-3-phosphoethanolamine + (5Z,8Z,11Z,14Z)-eicosatetraenoate + H(+). The enzyme catalyses a 1,2-diacyl-sn-glycero-3-phospho-(1'-sn-glycerol) + H2O = 1-acyl-sn-glycero-3-phospho-(1'-sn-glycerol) + a fatty acid + H(+). It catalyses the reaction 1-hexadecanoyl-2-(9Z-octadecenoyl)-sn-glycero-3-phospho-(1'-sn-glycerol) + H2O = 1-hexadecanoyl-sn-glycero-3-phospho-(1'-sn-glycerol) + (9Z)-octadecenoate + H(+). The catalysed reaction is a 1,2-diacyl-sn-glycero-3-phospho-(1'-sn-glycerol) + H2O = 2-acyl-sn-glycero-3-phospho-(1'-sn-glycerol) + a fatty acid + H(+). It carries out the reaction 1-hexadecanoyl-2-(9Z-octadecenoyl)-sn-glycero-3-phospho-(1'-sn-glycerol) + H2O = 2-(9Z-octadecenoyl)-sn-glycero-3-phospho-(1'-sn-glycerol) + hexadecanoate + H(+). Phospholipase sn-2 versus sn-1 positional specificity is affected by the phospholipid composition of membranes. Phospholipase A2 activity toward 1-hexadecanoyl-2-(5Z,8Z,11Z,14Z-eicosatetraenoyl)-sn-glycero-3-phosphocholine (PAPE) is enhanced in the presence of 1,2-dioleoyl-sn-glycero-3-phosphocholine (DOPC), which promotes lipid bilayer formation. O-acyltransferase activity is inhibited by antiarrhythmic drug amiodarone. In terms of biological role, has dual calcium-independent phospholipase and O-acyltransferase activities with a potential role in glycerophospholipid homeostasis and remodeling of acyl groups of lipophilic alcohols present in acidic cellular compartments. Catalyzes hydrolysis of the ester bond of the fatty acyl group attached at sn-1 or sn-2 position of phospholipids (phospholipase A1 or A2 activity) and transfer it to the hydroxyl group at the first carbon of lipophilic alcohols (O-acyltransferase activity). Among preferred fatty acyl donors are phosphatidylcholines, phosphatidylethanolamines, phosphatidylglycerols and phosphatidylserines. Favors sn-2 over sn-1 deacylation of unsaturated fatty acyl groups of phosphatidylcholines, phosphatidylethanolamines, and phosphatidylglycerols. Among preferred fatty acyl acceptors are natural lipophilic alcohols including short-chain ceramide N-acetyl-sphingosine (C2 ceramide), alkylacylglycerols, monoacylglycerols, and acylethanolamides such as anandamide and oleoylethanolamide. Selectively hydrolyzes the sn-1 fatty acyl group of truncated oxidized phospholipids and may play a role in detoxification of reactive oxidized phospholipids during oxidative stress. Required for normal phospholipid degradation in alveolar macrophages with potential implications in the clearance of pulmonary surfactant, which is mainly composed of dipalmitoylphosphatidylcholine (1,2-dihexadecanoyl-sn-glycero-3-phosphocholine). Involved in the first step of bis(monoacylglycero)phosphate (BMP) de novo synthesis from phosphatidylglycerol (1,2-diacyl-sn-glycero-3-phospho-(1'-sn-glycerol), PG). BMP is an important player in cargo sorting and degradation, regulation of cellular cholesterol levels and intercellular communication. At neutral pH, hydrolyzes the sn-1 fatty acyl group of the lysophosphatidylcholines. The sequence is that of Lysosomal phospholipase A and acyltransferase from Mus musculus (Mouse).